Reading from the N-terminus, the 533-residue chain is CWF19-like protein 1 homolog (533 aa).

A disordered region spans residues E290 to R314.

The protein belongs to the CWF19 family.

The protein is CWF19-like protein 1 homolog of Caenorhabditis elegans.